A 231-amino-acid polypeptide reads, in one-letter code: Orotate phosphoribosyltransferase (231 aa).

Lys-29 serves as a coordination point for 5-phospho-alpha-D-ribose 1-diphosphate. 37-38 (FF) contributes to the orotate binding site. Residues 75-76 (YK), Arg-107, Lys-108, Lys-111, His-113, and 133-141 (DDVISRCTA) contribute to the 5-phospho-alpha-D-ribose 1-diphosphate site. Positions 137 and 165 each coordinate orotate.

Belongs to the purine/pyrimidine phosphoribosyltransferase family. PyrE subfamily. As to quaternary structure, homodimer.

The catalysed reaction is orotidine 5'-phosphate + diphosphate = orotate + 5-phospho-alpha-D-ribose 1-diphosphate. It participates in pyrimidine metabolism; UMP biosynthesis via de novo pathway; UMP from orotate: step 1/2. Catalyzes the transfer of a ribosyl phosphate group from 5-phosphoribose 1-diphosphate to orotate, leading to the formation of orotidine monophosphate (OMP). The chain is Orotate phosphoribosyltransferase (URA5) from Podospora anserina (Pleurage anserina).